Here is a 382-residue protein sequence, read N- to C-terminus: Chorismate synthase (382 aa).

2 residues coordinate NADP(+): arginine 39 and arginine 45. A disordered region spans residues 89–113 (SPEPGGEPRKKALTDARPGHADLTG). Residues 94–108 (GEPRKKALTDARPGH) show a composition bias toward basic and acidic residues. FMN is bound by residues 128-130 (RAS), 246-247 (QA), alanine 290, 305-309 (KPIAT), and arginine 331.

Belongs to the chorismate synthase family. Homotetramer. FMNH2 serves as cofactor.

It catalyses the reaction 5-O-(1-carboxyvinyl)-3-phosphoshikimate = chorismate + phosphate. It functions in the pathway metabolic intermediate biosynthesis; chorismate biosynthesis; chorismate from D-erythrose 4-phosphate and phosphoenolpyruvate: step 7/7. Catalyzes the anti-1,4-elimination of the C-3 phosphate and the C-6 proR hydrogen from 5-enolpyruvylshikimate-3-phosphate (EPSP) to yield chorismate, which is the branch point compound that serves as the starting substrate for the three terminal pathways of aromatic amino acid biosynthesis. This reaction introduces a second double bond into the aromatic ring system. The sequence is that of Chorismate synthase from Deinococcus radiodurans (strain ATCC 13939 / DSM 20539 / JCM 16871 / CCUG 27074 / LMG 4051 / NBRC 15346 / NCIMB 9279 / VKM B-1422 / R1).